The primary structure comprises 287 residues: 4-hydroxybenzoate octaprenyltransferase (287 aa).

6 helical membrane passes run 41 to 61 (WPLL…GCAM), 89 to 109 (WEAV…ILPL), 133 to 153 (FFAI…PMAF), 158 to 178 (DTVP…SVAY), 202 to 224 (FGRF…YVWI), and 266 to 286 (HNNW…LLAG).

This sequence belongs to the UbiA prenyltransferase family. Mg(2+) is required as a cofactor.

It is found in the cell inner membrane. The enzyme catalyses all-trans-octaprenyl diphosphate + 4-hydroxybenzoate = 4-hydroxy-3-(all-trans-octaprenyl)benzoate + diphosphate. It participates in cofactor biosynthesis; ubiquinone biosynthesis. In terms of biological role, catalyzes the prenylation of para-hydroxybenzoate (PHB) with an all-trans polyprenyl group. Mediates the second step in the final reaction sequence of ubiquinone-8 (UQ-8) biosynthesis, which is the condensation of the polyisoprenoid side chain with PHB, generating the first membrane-bound Q intermediate 3-octaprenyl-4-hydroxybenzoate. This is 4-hydroxybenzoate octaprenyltransferase from Burkholderia orbicola (strain MC0-3).